Reading from the N-terminus, the 122-residue chain is Large ribosomal subunit protein uL14 (122 aa).

It belongs to the universal ribosomal protein uL14 family. As to quaternary structure, part of the 50S ribosomal subunit. Forms a cluster with proteins L3 and L19. In the 70S ribosome, L14 and L19 interact and together make contacts with the 16S rRNA in bridges B5 and B8.

Binds to 23S rRNA. Forms part of two intersubunit bridges in the 70S ribosome. The sequence is that of Large ribosomal subunit protein uL14 from Brucella anthropi (strain ATCC 49188 / DSM 6882 / CCUG 24695 / JCM 21032 / LMG 3331 / NBRC 15819 / NCTC 12168 / Alc 37) (Ochrobactrum anthropi).